A 410-amino-acid chain; its full sequence is Arginine deiminase (410 aa).

Catalysis depends on Cys-400, which acts as the Amidino-cysteine intermediate.

Belongs to the arginine deiminase family.

It is found in the cytoplasm. It carries out the reaction L-arginine + H2O = L-citrulline + NH4(+). It participates in amino-acid degradation; L-arginine degradation via ADI pathway; carbamoyl phosphate from L-arginine: step 1/2. This is Arginine deiminase from Bacillus cereus (strain G9842).